A 394-amino-acid polypeptide reads, in one-letter code: Ribulose bisphosphate carboxylase large chain (394 aa).

Lys5 carries the post-translational modification N6,N6,N6-trimethyllysine. Substrate is bound by residues Asn114 and Thr164. Lys166 (proton acceptor) is an active-site residue. Substrate is bound at residue Lys168. The Mg(2+) site is built by Lys192, Asp194, and Glu195. At Lys192 the chain carries N6-carboxylysine. Catalysis depends on His285, which acts as the Proton acceptor. Substrate-binding residues include Arg286, His318, and Ser370.

The protein belongs to the RuBisCO large chain family. Type I subfamily. Heterohexadecamer of 8 large chains and 8 small chains. It depends on Mg(2+) as a cofactor.

It localises to the plastid. The protein localises to the chloroplast. It catalyses the reaction 2 (2R)-3-phosphoglycerate + 2 H(+) = D-ribulose 1,5-bisphosphate + CO2 + H2O. It carries out the reaction D-ribulose 1,5-bisphosphate + O2 = 2-phosphoglycolate + (2R)-3-phosphoglycerate + 2 H(+). Functionally, ruBisCO catalyzes two reactions: the carboxylation of D-ribulose 1,5-bisphosphate, the primary event in carbon dioxide fixation, as well as the oxidative fragmentation of the pentose substrate in the photorespiration process. Both reactions occur simultaneously and in competition at the same active site. The protein is Ribulose bisphosphate carboxylase large chain (rbcL) of Victoria cruziana (Santa Cruz water lily).